The primary structure comprises 381 residues: UDP-N-acetylglucosamine--N-acetylmuramyl-(pentapeptide) pyrophosphoryl-undecaprenol N-acetylglucosamine transferase (381 aa).

UDP-N-acetyl-alpha-D-glucosamine-binding positions include 10–12 (TGG), Asn124, Arg165, Ser190, Ile245, and Gln290. Residues 361–381 (WGSPAGQERPGHGPVRPPDLA) are disordered.

The protein belongs to the glycosyltransferase 28 family. MurG subfamily.

The protein localises to the cell inner membrane. The enzyme catalyses di-trans,octa-cis-undecaprenyl diphospho-N-acetyl-alpha-D-muramoyl-L-alanyl-D-glutamyl-meso-2,6-diaminopimeloyl-D-alanyl-D-alanine + UDP-N-acetyl-alpha-D-glucosamine = di-trans,octa-cis-undecaprenyl diphospho-[N-acetyl-alpha-D-glucosaminyl-(1-&gt;4)]-N-acetyl-alpha-D-muramoyl-L-alanyl-D-glutamyl-meso-2,6-diaminopimeloyl-D-alanyl-D-alanine + UDP + H(+). Its pathway is cell wall biogenesis; peptidoglycan biosynthesis. Cell wall formation. Catalyzes the transfer of a GlcNAc subunit on undecaprenyl-pyrophosphoryl-MurNAc-pentapeptide (lipid intermediate I) to form undecaprenyl-pyrophosphoryl-MurNAc-(pentapeptide)GlcNAc (lipid intermediate II). This is UDP-N-acetylglucosamine--N-acetylmuramyl-(pentapeptide) pyrophosphoryl-undecaprenol N-acetylglucosamine transferase from Anaeromyxobacter sp. (strain Fw109-5).